Consider the following 915-residue polypeptide: Coronin-7 (915 aa).

4 WD repeats span residues 75-115 (CHSD…QALP), 124-163 (PEDAQVEVLQFHPTADGVLLSAAGRAVKVWDATKQQPLTE), 166-205 (THGDLVQGAAWSRDGALLGTTCKDKQLRIFDPRAKPEAAQ), and 209-253 (AHEN…AALT). Positions 396–456 (TSCLAPPAEL…TSPSQRSLQS (61 aa)) are disordered. 2 stretches are compositionally biased toward low complexity: residues 399 to 413 (LAPPAELTPATAQPA) and 420 to 450 (SSTPSSLTSPSTPSSLGPSLTSTSGIGTSPS). 2 positions are modified to phosphoserine: Ser-453 and Ser-456. Residue Lys-463 forms a Glycyl lysine isopeptide (Lys-Gly) (interchain with G-Cter in ubiquitin) linkage. 4 WD repeats span residues 533-573 (QNGV…LQEV), 583-623 (GHTE…EQLR), 626-665 (GHRDQIFGLAWSPDGQQLATVCKDGRLRIYEPRGSPEPLQ), and 719-759 (DVAP…PFFL). The tract at residues 850–915 (PPGMTPVSQA…FEGVDEDEWD (66 aa)) is disordered. Positions 859–869 (APREAPARRAP) are enriched in low complexity. Residues 874 to 886 (LEEKSDQQKKEEL) are compositionally biased toward basic and acidic residues. The residue at position 905 (Ser-905) is a Phosphoserine.

It belongs to the WD repeat coronin family. Interacts with clathrin adapter AP1 complex. This interaction takes place at Golgi membranes and not AP1-positive endosomal membranes. Interacts (when ubiquitinated at Lys-463) with EPS15. In terms of processing, the membrane-associated form is phosphorylated on tyrosine residues. Post-translationally, ubiquitinated via 'Lys-33'-linked ubiquitin chains by the BCR(KLHL20) E3 ubiquitin ligase complex: 'Lys-33'-linked ubiquitination promotes interaction with EPS15 and facilitates actin polymerization at the trans-Golgi network, thereby facilitating post-Golgi trafficking. Deubiquitinated by ZRANB1/TRABID.

It localises to the golgi apparatus membrane. It is found in the golgi apparatus. Its subcellular location is the trans-Golgi network. The protein resides in the cytoplasmic vesicle. The protein localises to the cytoplasm. It localises to the cytosol. In terms of biological role, F-actin regulator involved in anterograde Golgi to endosome transport: upon ubiquitination via 'Lys-33'-linked ubiquitin chains by the BCR(KLHL20) E3 ubiquitin ligase complex, interacts with EPS15 and localizes to the trans-Golgi network, where it promotes actin polymerization, thereby facilitating post-Golgi trafficking. May play a role in the maintenance of the Golgi apparatus morphology. The polypeptide is Coronin-7 (CORO7) (Bos taurus (Bovine)).